We begin with the raw amino-acid sequence, 256 residues long: Major prion protein (256 aa).

Positions 1–24 are cleaved as a signal peptide; sequence MVKSHIGSWILVLFVAMWSDVGLC. An interaction with GRB2, ERI3 and SYN1 region spans residues 25-233; it reads KKRPKPGGGW…ESEAYYQRGA (209 aa). A disordered region spans residues 28–110; sequence PKPGGGWNTG…QWNKPSKPKT (83 aa). 5 consecutive repeat copies span residues 54–62, 63–70, 71–78, 79–86, and 87–95. A 5 X 8 AA tandem repeats of P-H-G-G-G-W-G-Q region spans residues 54-95; the sequence is PQGGGGWGQPHGGGWGQPHGGGWGQPHGGGWGQPHGGGGWGQ. Residues 55 to 97 show a composition bias toward gly residues; it reads QGGGGWGQPHGGGWGQPHGGGWGQPHGGGWGQPHGGGGWGQGG. Positions 64, 65, 66, 72, 73, 74, 80, 81, 82, 88, 90, and 91 each coordinate Cu(2+). An intrachain disulfide couples Cys-182 to Cys-217. N-linked (GlcNAc...) asparagine glycosylation is found at Asn-184 and Asn-200. Ala-233 carries GPI-anchor amidated alanine lipidation. A propeptide spans 234-256 (removed in mature form); the sequence is SVILFSSPPVILLISFLIFLIVG.

This sequence belongs to the prion family. As to quaternary structure, monomer and homodimer. Has a tendency to aggregate into amyloid fibrils containing a cross-beta spine, formed by a steric zipper of superposed beta-strands. Soluble oligomers may represent an intermediate stage on the path to fibril formation. Copper binding may promote oligomerization. Interacts with GRB2, APP, ERI3/PRNPIP and SYN1. Mislocalized cytosolically exposed PrP interacts with MGRN1; this interaction alters MGRN1 subcellular location and causes lysosomal enlargement. Interacts with KIAA1191.

It is found in the cell membrane. It localises to the golgi apparatus. Its primary physiological function is unclear. Has cytoprotective activity against internal or environmental stresses. May play a role in neuronal development and synaptic plasticity. May be required for neuronal myelin sheath maintenance. May play a role in iron uptake and iron homeostasis. Soluble oligomers are toxic to cultured neuroblastoma cells and induce apoptosis (in vitro). Association with GPC1 (via its heparan sulfate chains) targets PRNP to lipid rafts. Also provides Cu(2+) or Zn(2+) for the ascorbate-mediated GPC1 deaminase degradation of its heparan sulfate side chains. In Cervus elaphus (Red deer), this protein is Major prion protein (PRNP).